Reading from the N-terminus, the 156-residue chain is Mitochondrial translation release factor in rescue (156 aa).

The interval 44 to 108 is GGQ domain; the sequence is EEELEEQFVR…LREKLEVAYK (65 aa). Positions 58–60 match the GGQ motif; it reads GGQ. Positions 100 to 141 form a coiled coil; that stretch reads REKLEVAYKGEESELLKMKKESMQKKQDKRRKVNENIEKKRR. Composition is skewed to basic and acidic residues over residues 114 to 125 and 132 to 156; these read LLKMKKESMQKK and VNEN…DKST. The disordered stretch occupies residues 114–156; sequence LLKMKKESMQKKQDKRRKVNENIEKKRRFKEMLNSKQEDDKST.

The protein belongs to the prokaryotic/mitochondrial release factor family. As to quaternary structure, interacts (via C-terminus) with MTRES1 (via S4 domain). Associates with mitoribosomal S39 large subunit, peptidyl tRNA and nascent chain.

It is found in the mitochondrion. Functionally, part of a mitoribosome-associated quality control pathway that prevents aberrant translation by responding to interruptions during elongation. As heterodimer with MTRES1, ejects the unfinished nascent chain and peptidyl transfer RNA (tRNA), respectively, from stalled ribosomes. Recruitment of mitoribosome biogenesis factors to these quality control intermediates suggests additional roles for MTRES1 and MTRF during mitoribosome rescue. The polypeptide is Mitochondrial translation release factor in rescue (mtrfr) (Danio rerio (Zebrafish)).